We begin with the raw amino-acid sequence, 214 residues long: ATP phosphoribosyltransferase (214 aa).

The protein belongs to the ATP phosphoribosyltransferase family. Short subfamily. As to quaternary structure, heteromultimer composed of HisG and HisZ subunits.

Its subcellular location is the cytoplasm. It carries out the reaction 1-(5-phospho-beta-D-ribosyl)-ATP + diphosphate = 5-phospho-alpha-D-ribose 1-diphosphate + ATP. Its pathway is amino-acid biosynthesis; L-histidine biosynthesis; L-histidine from 5-phospho-alpha-D-ribose 1-diphosphate: step 1/9. Catalyzes the condensation of ATP and 5-phosphoribose 1-diphosphate to form N'-(5'-phosphoribosyl)-ATP (PR-ATP). Has a crucial role in the pathway because the rate of histidine biosynthesis seems to be controlled primarily by regulation of HisG enzymatic activity. This chain is ATP phosphoribosyltransferase, found in Nostoc punctiforme (strain ATCC 29133 / PCC 73102).